The sequence spans 148 residues: Lysozyme-like protein 6 (148 aa).

The signal sequence occupies residues 1–19; that stretch reads MTSPLLISLASCLVAVNQA. Positions 20-148 constitute a C-type lysozyme domain; it reads SLIGRCDLAK…SYWMTGCHLA (129 aa). 4 disulfide bridges follow: Cys25–Cys145, Cys49–Cys133, Cys83–Cys98, and Cys94–Cys112. Residues Glu54 and Asp71 contribute to the active site.

The protein belongs to the glycosyl hydrolase 22 family. As to quaternary structure, monomer.

The protein resides in the secreted. It localises to the cell surface. Its subcellular location is the cell projection. The protein localises to the cilium. It is found in the flagellum. It carries out the reaction Hydrolysis of (1-&gt;4)-beta-linkages between N-acetylmuramic acid and N-acetyl-D-glucosamine residues in a peptidoglycan and between N-acetyl-D-glucosamine residues in chitodextrins.. In terms of biological role, may be involved sperm-egg plasma membrane adhesion and fusion during fertilization. Exhibits bacteriolytic activity in vitro against Micrococcus luteus and Staphylococcus aureus. Shows weak bacteriolytic activity against Gram-positive bacteria at physiological pH. Bacteriolytic activity is pH-dependent, with a maximum at around pH 5.6. This chain is Lysozyme-like protein 6 (LYZL6), found in Bos taurus (Bovine).